The chain runs to 318 residues: L-lactate dehydrogenase (318 aa).

NAD(+)-binding positions include Val18, Asp39, Lys44, Tyr69, and 83-84; that span reads GA. Residues Gln86 and Arg92 each coordinate substrate. NAD(+)-binding positions include Ser105, 122–124, and Ser147; that span reads VSN. Residue 124–127 participates in substrate binding; it reads NPVD. 152-155 provides a ligand contact to substrate; sequence DTSR. His179 functions as the Proton acceptor in the catalytic mechanism. Tyr225 is subject to Phosphotyrosine. Position 234 (Thr234) interacts with substrate.

Belongs to the LDH/MDH superfamily. LDH family. Homotetramer.

It localises to the cytoplasm. The catalysed reaction is (S)-lactate + NAD(+) = pyruvate + NADH + H(+). It participates in fermentation; pyruvate fermentation to lactate; (S)-lactate from pyruvate: step 1/1. Its function is as follows. Catalyzes the conversion of lactate to pyruvate. This Clostridium botulinum (strain ATCC 19397 / Type A) protein is L-lactate dehydrogenase.